The primary structure comprises 101 residues: Urease subunit beta (101 aa).

The protein belongs to the urease beta subunit family. Heterotrimer of UreA (gamma), UreB (beta) and UreC (alpha) subunits. Three heterotrimers associate to form the active enzyme.

Its subcellular location is the cytoplasm. It catalyses the reaction urea + 2 H2O + H(+) = hydrogencarbonate + 2 NH4(+). It participates in nitrogen metabolism; urea degradation; CO(2) and NH(3) from urea (urease route): step 1/1. In Ruegeria sp. (strain TM1040) (Silicibacter sp.), this protein is Urease subunit beta.